Consider the following 111-residue polypeptide: Universal stress protein B (111 aa).

The next 2 membrane-spanning stretches (helical) occupy residues 1-21 and 90-110; these read MIST…NMAR and FILT…LMIW.

Belongs to the universal stress protein B family.

It is found in the cell inner membrane. This Cronobacter sakazakii (strain ATCC BAA-894) (Enterobacter sakazakii) protein is Universal stress protein B.